The following is a 381-amino-acid chain: Putative F-box/kelch-repeat protein At3g17570 (381 aa).

Residues 1–45 form the F-box domain; sequence MFTDLPRDLETEILSRVPATSLQKLKPTCKRWYTLFKDPEFLKKH. Kelch repeat units lie at residues 151–199, 229–281, and 331–379; these read SYKI…TLKG, LLYQ…KIVE, and RFYI…GGKR.

This is Putative F-box/kelch-repeat protein At3g17570 from Arabidopsis thaliana (Mouse-ear cress).